The chain runs to 521 residues: Ribonuclease Y (521 aa).

A helical transmembrane segment spans residues 1 to 21; sequence MFFIEHPFVYLGLDLIVGCLI. One can recognise a KH domain in the interval 211 to 271; sequence TVSMVPLPSD…VRREVARLAL (61 aa). In terms of domain architecture, HD spans 337–430; it reads VLQHSLEVAF…VQAADALSGA (94 aa).

Belongs to the RNase Y family.

The protein resides in the cell membrane. Endoribonuclease that initiates mRNA decay. This is Ribonuclease Y from Desulfotalea psychrophila (strain LSv54 / DSM 12343).